A 146-amino-acid chain; its full sequence is Cytidine deaminase (146 aa).

A CMP/dCMP-type deaminase domain is found at 13–140; the sequence is EHVQRLLLSS…ELLPASFGPE (128 aa). A substrate-binding site is contributed by 54–56; that stretch reads NIE. Position 65 (cysteine 65) interacts with Zn(2+). The active-site Proton donor is glutamate 67. The Zn(2+) site is built by cysteine 99 and cysteine 102.

This sequence belongs to the cytidine and deoxycytidylate deaminase family. Homotetramer. Requires Zn(2+) as cofactor.

It catalyses the reaction cytidine + H2O + H(+) = uridine + NH4(+). The catalysed reaction is 2'-deoxycytidine + H2O + H(+) = 2'-deoxyuridine + NH4(+). Functionally, this enzyme scavenges exogenous and endogenous cytidine and 2'-deoxycytidine for UMP synthesis. In Mus musculus (Mouse), this protein is Cytidine deaminase (Cda).